Here is a 641-residue protein sequence, read N- to C-terminus: DNA primase (641 aa).

The CHC2-type zinc finger occupies 41-65 (CPFHDEKSPSFQVSPSKGFFHCFGC). A Toprim domain is found at 262 to 346 (SRAVVVEGYT…AAETYIAIAP (85 aa)). Mg(2+) is bound by residues Glu268, Asp317, and Asp319. The disordered stretch occupies residues 444–478 (RDRGGKGPAPDQRQRGGGPQQQAGPMTATPRGPAL).

The protein belongs to the DnaG primase family. As to quaternary structure, monomer. Interacts with DnaB. It depends on Zn(2+) as a cofactor. Mg(2+) serves as cofactor.

It carries out the reaction ssDNA + n NTP = ssDNA/pppN(pN)n-1 hybrid + (n-1) diphosphate.. RNA polymerase that catalyzes the synthesis of short RNA molecules used as primers for DNA polymerase during DNA replication. The polypeptide is DNA primase (Streptomyces coelicolor (strain ATCC BAA-471 / A3(2) / M145)).